The chain runs to 311 residues: Malate dehydrogenase (311 aa).

Residues 7-12 (GAGNVG) and Asp32 contribute to the NAD(+) site. 2 residues coordinate substrate: Arg82 and Arg88. NAD(+)-binding positions include Asn95 and 118-120 (VSN). 2 residues coordinate substrate: Asn120 and Arg151. His175 acts as the Proton acceptor in catalysis.

This sequence belongs to the LDH/MDH superfamily. MDH type 3 family. As to quaternary structure, homotetramer.

It carries out the reaction (S)-malate + NAD(+) = oxaloacetate + NADH + H(+). With respect to regulation, strongly inhibited by iodoacetic acid and CuCl(2). Completely inhibited by N-ethylmaleimide and HgCl(2). Functionally, catalyzes the reversible oxidation of malate to oxaloacetate. Can use both NAD and NADP for malate oxidation, but NADPH cannot be used for oxaloacetate reduction. This chain is Malate dehydrogenase, found in Flavobacterium frigidimaris.